We begin with the raw amino-acid sequence, 264 residues long: 3-methyl-2-oxobutanoate hydroxymethyltransferase (264 aa).

The Mg(2+) site is built by Asp-45 and Asp-84. 3-methyl-2-oxobutanoate-binding positions include Asp-45–Ser-46, Asp-84, and Lys-112. Glu-114 contributes to the Mg(2+) binding site. Residue Glu-181 is the Proton acceptor of the active site.

This sequence belongs to the PanB family. In terms of assembly, homodecamer; pentamer of dimers. The cofactor is Mg(2+).

The protein resides in the cytoplasm. The enzyme catalyses 3-methyl-2-oxobutanoate + (6R)-5,10-methylene-5,6,7,8-tetrahydrofolate + H2O = 2-dehydropantoate + (6S)-5,6,7,8-tetrahydrofolate. The protein operates within cofactor biosynthesis; (R)-pantothenate biosynthesis; (R)-pantoate from 3-methyl-2-oxobutanoate: step 1/2. In terms of biological role, catalyzes the reversible reaction in which hydroxymethyl group from 5,10-methylenetetrahydrofolate is transferred onto alpha-ketoisovalerate to form ketopantoate. In Tolumonas auensis (strain DSM 9187 / NBRC 110442 / TA 4), this protein is 3-methyl-2-oxobutanoate hydroxymethyltransferase.